Consider the following 290-residue polypeptide: Probable branched-chain-amino-acid aminotransferase (290 aa).

Residue lysine 155 is modified to N6-(pyridoxal phosphate)lysine.

Belongs to the class-IV pyridoxal-phosphate-dependent aminotransferase family. Requires pyridoxal 5'-phosphate as cofactor.

It carries out the reaction L-leucine + 2-oxoglutarate = 4-methyl-2-oxopentanoate + L-glutamate. The enzyme catalyses L-isoleucine + 2-oxoglutarate = (S)-3-methyl-2-oxopentanoate + L-glutamate. The catalysed reaction is L-valine + 2-oxoglutarate = 3-methyl-2-oxobutanoate + L-glutamate. The protein operates within amino-acid biosynthesis; L-isoleucine biosynthesis; L-isoleucine from 2-oxobutanoate: step 4/4. It functions in the pathway amino-acid biosynthesis; L-leucine biosynthesis; L-leucine from 3-methyl-2-oxobutanoate: step 4/4. It participates in amino-acid biosynthesis; L-valine biosynthesis; L-valine from pyruvate: step 4/4. In terms of biological role, acts on leucine, isoleucine and valine. This is Probable branched-chain-amino-acid aminotransferase (ilvE) from Rickettsia conorii (strain ATCC VR-613 / Malish 7).